The following is a 227-amino-acid chain: Cytochrome c oxidase subunit 2 (227 aa).

Over 1-14 (MAYPFQLGFQDATS) the chain is Mitochondrial intermembrane. A helical membrane pass occupies residues 15-45 (PIMEELLHFHDHTLMIVFLISSLVLYIISSM). Over 46 to 59 (LTTKLTHTSTMDAQ) the chain is Mitochondrial matrix. The chain crosses the membrane as a helical span at residues 60 to 87 (EVETIWTILPAIILILIALPSLRILYMM). At 88–227 (DEINNPSLTV…HFEEWSASML (140 aa)) the chain is on the mitochondrial intermembrane side. The Cu cation site is built by His161, Cys196, Glu198, Cys200, His204, and Met207. Position 198 (Glu198) interacts with Mg(2+).

The protein belongs to the cytochrome c oxidase subunit 2 family. In terms of assembly, component of the cytochrome c oxidase (complex IV, CIV), a multisubunit enzyme composed of 14 subunits. The complex is composed of a catalytic core of 3 subunits MT-CO1, MT-CO2 and MT-CO3, encoded in the mitochondrial DNA, and 11 supernumerary subunits COX4I, COX5A, COX5B, COX6A, COX6B, COX6C, COX7A, COX7B, COX7C, COX8 and NDUFA4, which are encoded in the nuclear genome. The complex exists as a monomer or a dimer and forms supercomplexes (SCs) in the inner mitochondrial membrane with NADH-ubiquinone oxidoreductase (complex I, CI) and ubiquinol-cytochrome c oxidoreductase (cytochrome b-c1 complex, complex III, CIII), resulting in different assemblies (supercomplex SCI(1)III(2)IV(1) and megacomplex MCI(2)III(2)IV(2)). Found in a complex with TMEM177, COA6, COX18, COX20, SCO1 and SCO2. Interacts with TMEM177 in a COX20-dependent manner. Interacts with COX20. Interacts with COX16. Requires Cu cation as cofactor.

Its subcellular location is the mitochondrion inner membrane. The enzyme catalyses 4 Fe(II)-[cytochrome c] + O2 + 8 H(+)(in) = 4 Fe(III)-[cytochrome c] + 2 H2O + 4 H(+)(out). Component of the cytochrome c oxidase, the last enzyme in the mitochondrial electron transport chain which drives oxidative phosphorylation. The respiratory chain contains 3 multisubunit complexes succinate dehydrogenase (complex II, CII), ubiquinol-cytochrome c oxidoreductase (cytochrome b-c1 complex, complex III, CIII) and cytochrome c oxidase (complex IV, CIV), that cooperate to transfer electrons derived from NADH and succinate to molecular oxygen, creating an electrochemical gradient over the inner membrane that drives transmembrane transport and the ATP synthase. Cytochrome c oxidase is the component of the respiratory chain that catalyzes the reduction of oxygen to water. Electrons originating from reduced cytochrome c in the intermembrane space (IMS) are transferred via the dinuclear copper A center (CU(A)) of subunit 2 and heme A of subunit 1 to the active site in subunit 1, a binuclear center (BNC) formed by heme A3 and copper B (CU(B)). The BNC reduces molecular oxygen to 2 water molecules using 4 electrons from cytochrome c in the IMS and 4 protons from the mitochondrial matrix. The chain is Cytochrome c oxidase subunit 2 (MT-CO2) from Equus caballus (Horse).